The following is a 389-amino-acid chain: S-adenosylmethionine synthase (389 aa).

Position 15 (H15) interacts with ATP. D17 is a binding site for Mg(2+). Position 43 (E43) interacts with K(+). The L-methionine site is built by E56 and Q99. Residues 99-109 (QSPDIAQGVNE) form a flexible loop region. Residues 166 to 168 (DAK), 234 to 235 (RF), D243, 249 to 250 (RK), A266, and K270 contribute to the ATP site. D243 contributes to the L-methionine binding site. K274 provides a ligand contact to L-methionine.

It belongs to the AdoMet synthase family. In terms of assembly, homotetramer; dimer of dimers. The cofactor is Mg(2+). Requires K(+) as cofactor.

It is found in the cytoplasm. It carries out the reaction L-methionine + ATP + H2O = S-adenosyl-L-methionine + phosphate + diphosphate. It participates in amino-acid biosynthesis; S-adenosyl-L-methionine biosynthesis; S-adenosyl-L-methionine from L-methionine: step 1/1. Its function is as follows. Catalyzes the formation of S-adenosylmethionine (AdoMet) from methionine and ATP. The overall synthetic reaction is composed of two sequential steps, AdoMet formation and the subsequent tripolyphosphate hydrolysis which occurs prior to release of AdoMet from the enzyme. The polypeptide is S-adenosylmethionine synthase (Neisseria meningitidis serogroup C (strain 053442)).